The chain runs to 134 residues: ATP synthase epsilon chain (134 aa).

This sequence belongs to the ATPase epsilon chain family. In terms of assembly, F-type ATPases have 2 components, CF(1) - the catalytic core - and CF(0) - the membrane proton channel. CF(1) has five subunits: alpha(3), beta(3), gamma(1), delta(1), epsilon(1). CF(0) has three main subunits: a, b and c.

It is found in the cell membrane. Functionally, produces ATP from ADP in the presence of a proton gradient across the membrane. The sequence is that of ATP synthase epsilon chain (atpC) from Priestia megaterium (strain ATCC 12872 / QMB1551) (Bacillus megaterium).